We begin with the raw amino-acid sequence, 50 residues long: uncharacterized protein (50 aa).

Residues 28 to 50 form a disordered region; it reads SKLSPVTNGGKTIGKSNKVSKND. Polar residues predominate over residues 29-50; that stretch reads KLSPVTNGGKTIGKSNKVSKND.

This is an uncharacterized protein from Haemophilus influenzae (strain ATCC 51907 / DSM 11121 / KW20 / Rd).